The chain runs to 1101 residues: MTYAELCVTTNFTFLTGASHPEEMITRAAELGLHAIAITDRNSLAGVVRAYAALKELRREADEAIRIRSQHRIDSCSRQEVGHPQPIARPEAPRLPRLITGCRLVLRDSPLHWIALPRDRAAYQRLTRLLTLGKRRAEKGDCHLDLADLLAGCTGMILIALPQGRLDGALPHLQQVQRRFPGHVFLGAAPRYDGSDQAWLAACARLALRSSAPMVAVGDALMHRANRRQLADVLTCMREHITIDRIGTRALPNAERRLKGHADMARLFRDHPAALRRTLDIAARCSFCLSELSYEYPDEVAEGETPQARLERLTAEGIVRRYPGGAPQRVHELVAKELKLVAELGFPAYFLTVHDIVQFARSQGILCQGRGSAANSILCYLLGITDVSPDQIAMVFERFISKYRGEPPDIDVDFEHERREEVIQWIYQRYGRHRAGLCATVIHFRSRAAIREVGKVMGLSQDVTASLSGQIWGQSNGGADPERMRELGLDPEDRRLALTIRLIGEIIGFPRHLSQHVGGFVITRGRLDELAPIENAAMEDRTLIEWDKDDIDTLGILKVDVLGLGMLTCIRKAFDLMREHEQRHLSIDTVPQEDAATYDMLCAADAVGVFQVESRAQMNFLPRMRPRTFYDLVIEVAIVRPGPIQGGMVQPYIRRRQGLEKAEPFGPELAAVTARTLGVPLFQEQALQIAVVGAGYTAEEADHLRRSLASFRRMGTIGAHRDTFIAGMRRNGYSQEVAERCFGQIEGFADYGFPESHAAAFAMLAYVSAWLKCHHPAIFACALLNAQPMGFYAPAQIVRDARDHQVELRPICVNASDWDNRLERRADGALALRLGFRQIKGFREEDAAWIVAARGNGYPDPQALWLRAGVTPAVLERLAEADAFADMGIGRRDALWQVRAIRGQAPLPLFNDPLDGEIIHEPQVTLPAMHLGEEVVEDYVSMRLTLRAHPMELLRPAIPGLTPHDKLASVAAHRVSVCGLVITRQRPGTASGVIFLTLEDETGVSNVVVWPKIYEQFRRIVMGGRLLRVTGTLQREGIVVHLIAQRIEDLSPRLADLGHPMDSAVGQTTPQTDSAPRPRPQPRAMHPREQAKRLFPSRDFH.

The interval 1055–1101 (ADLGHPMDSAVGQTTPQTDSAPRPRPQPRAMHPREQAKRLFPSRDFH) is disordered. A compositionally biased stretch (polar residues) spans 1065–1074 (VGQTTPQTDS). Basic and acidic residues predominate over residues 1086-1101 (HPREQAKRLFPSRDFH).

Belongs to the DNA polymerase type-C family. DnaE2 subfamily.

It localises to the cytoplasm. The enzyme catalyses DNA(n) + a 2'-deoxyribonucleoside 5'-triphosphate = DNA(n+1) + diphosphate. DNA polymerase involved in damage-induced mutagenesis and translesion synthesis (TLS). It is not the major replicative DNA polymerase. This Ruegeria pomeroyi (strain ATCC 700808 / DSM 15171 / DSS-3) (Silicibacter pomeroyi) protein is Error-prone DNA polymerase.